Here is a 225-residue protein sequence, read N- to C-terminus: uncharacterized protein (225 aa).

The interval 32-82 (PKDKKKQNDTENKKKQPKDGENDKQKEQAETQPFEWIQQKDADDKKESNTA) is disordered. Basic and acidic residues-rich tracts occupy residues 37–60 (KQNDTENKKKQPKDGENDKQKEQA) and 69–79 (QQKDADDKKES).

Belongs to the MG067/MG068/MG395 family.

This is an uncharacterized protein from Mycoplasma pneumoniae (strain ATCC 29342 / M129 / Subtype 1) (Mycoplasmoides pneumoniae).